Reading from the N-terminus, the 932-residue chain is Alanine--tRNA ligase, mitochondrial (932 aa).

A disordered region spans residues 458–480; the sequence is SRLTWNTSSSSSDQTTQQTTQLP. Residues 464 to 478 show a composition bias toward low complexity; it reads TSSSSSDQTTQQTTQ. Residues H610, H614, C713, and H717 each contribute to the Zn(2+) site.

It belongs to the class-II aminoacyl-tRNA synthetase family. As to quaternary structure, monomer. The cofactor is Zn(2+).

Its subcellular location is the mitochondrion. It catalyses the reaction tRNA(Ala) + L-alanine + ATP = L-alanyl-tRNA(Ala) + AMP + diphosphate. In terms of biological role, catalyzes the attachment of alanine to tRNA(Ala) in a two-step reaction: alanine is first activated by ATP to form Ala-AMP and then transferred to the acceptor end of tRNA(Ala). Also edits incorrectly charged tRNA(Ala) via its editing domain. This chain is Alanine--tRNA ligase, mitochondrial (malaS), found in Dictyostelium discoideum (Social amoeba).